A 741-amino-acid chain; its full sequence is Polyribonucleotide nucleotidyltransferase (741 aa).

Mg(2+) is bound by residues Asp489 and Asp495. The KH domain occupies 556–615; the sequence is PKIDSIQIPVDKIKVVIGKGGETIDKIIAETGVTIDIDEEGLVQIFSSDQDAIDRAKTII. The 69-residue stretch at 625–693 folds into the S1 motif domain; sequence GEVYTVPVVR…EKGRVDASIK (69 aa). The segment at 695-741 is disordered; it reads LLPKPEKNEDGENGEEHRHCCCSHHKPDHHNESVEAPKKSDESETKE. 2 stretches are compositionally biased toward basic and acidic residues: residues 698-713 and 723-741; these read KPEK…EHRH and HHNE…ETKE.

Belongs to the polyribonucleotide nucleotidyltransferase family. Mg(2+) serves as cofactor.

It is found in the cytoplasm. It catalyses the reaction RNA(n+1) + phosphate = RNA(n) + a ribonucleoside 5'-diphosphate. Involved in mRNA degradation. Catalyzes the phosphorolysis of single-stranded polyribonucleotides processively in the 3'- to 5'-direction. The sequence is that of Polyribonucleotide nucleotidyltransferase from Streptococcus thermophilus (strain CNRZ 1066).